The primary structure comprises 255 residues: Formate hydrogenlyase subunit 7 (255 aa).

Positions 45, 51, 115, and 145 each coordinate [4Fe-4S] cluster.

This sequence belongs to the complex I 20 kDa subunit family. In terms of assembly, FHL comprises of a formate dehydrogenase, unidentified electron carriers and a hydrogenase (isoenzyme 3). In this non-energy conserving pathway molecular hydrogen and carbodioxide from formate are released. Requires [4Fe-4S] cluster as cofactor.

This chain is Formate hydrogenlyase subunit 7 (hycG), found in Escherichia coli (strain K12).